The chain runs to 126 residues: UPF0538 protein C2orf76 homolog (126 aa).

It belongs to the UPF0538 family.

The chain is UPF0538 protein C2orf76 homolog from Danio rerio (Zebrafish).